The following is a 4700-amino-acid chain: StAR-related lipid transfer protein 9 (4700 aa).

Positions 3–384 (NVQVAVRVRP…LRYASSAKNI (382 aa)) constitute a Kinesin motor domain. 103–110 (GQTGSGKT) lines the ATP pocket. A compositionally biased stretch (low complexity) spans 310 to 328 (GDSGILSSPSGTSSGGAPS). Residues 310–331 (GDSGILSSPSGTSSGGAPSRRQ) form a disordered region. The region spanning 498 to 569 (LKEGTTKIGR…LTQGAVITLG (72 aa)) is the FHA domain. Basic and acidic residues-rich tracts occupy residues 631–646 (QCDE…ETSH) and 867–877 (TSEKTSSEEHL). Disordered stretches follow at residues 631–652 (QCDE…QIQQ), 851–880 (WDPS…LPQA), 1057–1104 (KKSS…SDTD), and 1128–1188 (ERKW…GFTA). Positions 1134–1146 (PEPENSESDDSQL) are enriched in acidic residues. At Ser1203 the chain carries Phosphoserine. 22 disordered regions span residues 1939–1976 (MPGE…EGKN), 2014–2043 (ERNP…RVNN), 2088–2179 (DQKE…PARD), 2254–2290 (ESQV…QEEN), 2377–2403 (GVEH…SSEA), 2416–2444 (MGSH…SPQD), 2479–2539 (LNKV…PRLL), 2589–2613 (RVAG…EGEA), 2642–2678 (LSAD…RKRR), 2696–2731 (SSSS…PVEE), 2765–2789 (PQET…PRTL), 2821–2852 (VQNS…ASPK), 2892–2955 (SKHS…PCRQ), 3124–3144 (NAQV…PHTL), 3199–3241 (HTCS…GLDG), 3274–3412 (SLRQ…MPST), 3564–3611 (IALG…KGSA), 3766–3790 (SDTS…AEET), 3830–3884 (LPSV…RVQK), 3906–3991 (ASTQ…SPKL), 4033–4086 (PEKV…QHLS), and 4153–4193 (PGGL…EWSK). Basic and acidic residues predominate over residues 2088–2100 (DQKEQEKTDHAFR). Residues 2103–2118 (SSGNPLPSKDQPSSPR) show a composition bias toward polar residues. A compositionally biased stretch (basic and acidic residues) spans 2119–2129 (QTDDTVFRDSE). Residues 2137–2148 (SIGNHPQVQKIT) are compositionally biased toward polar residues. The span at 2153–2169 (RSREGVRESEPVREHTH) shows a compositional bias: basic and acidic residues. A compositionally biased stretch (polar residues) spans 2254–2266 (ESQVAEHVSSSNQ). 2 stretches are compositionally biased toward basic and acidic residues: residues 2267-2279 (EEPK…EEMP) and 2379-2391 (EHQD…RSHS). A compositionally biased stretch (basic and acidic residues) spans 2500-2510 (QASKPRQKAEK). Residues 2642–2653 (LSADSFESLPNT) are compositionally biased toward polar residues. Positions 2712-2729 (PSSADPLAPDSPRSSAPV) are enriched in low complexity. Positions 2916 to 2925 (APCRHPREAL) are enriched in basic and acidic residues. The segment covering 3124–3141 (NAQVCQTNPEPPATTQGP) has biased composition (polar residues). Polar residues-rich tracts occupy residues 3274–3285 (SLRQNETPQPAA), 3320–3339 (SSPT…QELN), and 3368–3387 (SGKS…QKAS). The span at 3388–3397 (SRLDDGTTDH) shows a compositional bias: basic and acidic residues. Positions 3857 to 3872 (SSPSPSSPHSPGLFPS) are enriched in low complexity. A compositionally biased stretch (polar residues) spans 3906-3924 (ASTQEPGLSPGSLTLSAPS). A compositionally biased stretch (low complexity) spans 3958–3975 (LGGSQRGRSSLQRSNGRS). Residues 4048-4065 (EPSQWQSRTENGGESSAS) are compositionally biased toward polar residues. Residues 4334-4387 (SDIELMLQDYQQAHEEAKVEIARARDQLRERTEQEKLRIHQKIISQLLKEEDKL) adopt a coiled-coil conformation. The span at 4397-4411 (CTSSNGSLSSGMTSG) shows a compositional bias: low complexity. A disordered region spans residues 4397–4419 (CTSSNGSLSSGMTSGYNSSPALS). In terms of domain architecture, START spans 4483 to 4700 (SYQDLAKHVV…IARLASFLGR (218 aa)).

It belongs to the TRAFAC class myosin-kinesin ATPase superfamily. Kinesin family. In terms of assembly, interacts with ATAD3A. As to expression, expressed in the central nervous system, muscle cells (heart and skeletal muscle), pancreas, prostate and lung.

The protein localises to the cytoplasm. It localises to the cytoskeleton. The protein resides in the microtubule organizing center. Its subcellular location is the centrosome. It is found in the centriole. The protein localises to the nucleus. In terms of biological role, microtubule-dependent motor protein required for spindle pole assembly during mitosis. Required to stabilize the pericentriolar material (PCM). This is StAR-related lipid transfer protein 9 (STARD9) from Homo sapiens (Human).